Consider the following 1447-residue polypeptide: Bud site selection protein 4 (1447 aa).

Residues 1-16 (MHDAESTVDSLLKEID) are compositionally biased toward basic and acidic residues. 2 disordered regions span residues 1–38 (MHDAESTVDSLLKEIDNEMEQTKSNITQNGSEDTPHNW) and 57–76 (NTRSNATENSRGRSPSKMST). Serine 10 carries the post-translational modification Phosphoserine. Polar residues-rich tracts occupy residues 22 to 32 (TKSNITQNGSE) and 59 to 76 (RSNATENSRGRSPSKMST). Serine 78, serine 81, serine 91, serine 96, and serine 167 each carry phosphoserine. Residues 272–316 (NLPSKLLNTSNNSHSDSRSPTASVEDLNISTNLPGADSSQNNPVT) form a disordered region. The span at 277-316 (LLNTSNNSHSDSRSPTASVEDLNISTNLPGADSSQNNPVT) shows a compositional bias: polar residues. Threonine 365 is modified (phosphothreonine). The residue at position 367 (serine 367) is a Phosphoserine. A disordered region spans residues 444 to 479 (HQESEHANEQPAIIPQKDSSEETFTELNNESEFQRN). A Phosphoserine modification is found at serine 511. Residues 529–591 (KTSAEEHDLS…NEEPEHVPLL (63 aa)) are disordered. The segment covering 538 to 548 (SSSCEDQSVSE) has biased composition (polar residues). The segment covering 549-580 (ARNKDRIEEKEVETKDENIETEKDESEYHKVE) has biased composition (basic and acidic residues). Serine 616 carries the phosphoserine modification. A compositionally biased stretch (polar residues) spans 648 to 664 (ANSQFSQQSSITTASTV). A disordered region spans residues 648 to 673 (ANSQFSQQSSITTASTVDSKKDNGST). The tract at residues 768–879 (EHENIPLSTH…SLWESSYELK (112 aa)) is interaction with IQG1. Phosphoserine is present on residues serine 805 and serine 811. Residues 1302–1413 (NIYKEGYLLQ…WYNKLQEVVE (112 aa)) enclose the PH domain.

As to quaternary structure, interacts with AXL1, AXL2, IQG1 and SEC3. In terms of processing, phosphorylated by CDC28.

The protein localises to the bud neck. Required for establishment of the axial budding pattern in haploid cells. Cooperates with other bud site selection proteins to recognize a spatial landmark during mitosis and they subsequently become a landmark for downstream polarity establishment factors that coordinate axial budding and cytokinesis. Involved in the septin organization at the bud neck. The sequence is that of Bud site selection protein 4 (BUD4) from Saccharomyces cerevisiae (strain ATCC 204508 / S288c) (Baker's yeast).